The following is a 692-amino-acid chain: MTDGNLSTSTNGVALMGILDSRPGNHIQNLQHLTLKAPRSLSLPEYGPKLKLSALEDRHSLQSVDSGIPTLEIGNPEPVPCSVVHVRRKPSESEIVPERACQSACLLPSYAPPAPAGAEREQSVRKSSTFPRTGYDSVKLYSPASQTLQRSDNVSVCSVSSLSTELSTTLSVSNEDILDLVVTSSSSAIVTLENDDDPQFTDVTLSSTRETRDLQRDCAGETEEGRKLRLLGPFSHFFTRNSLARKQNARLDKQSDLGWKLFGKVPLGENAQKDAKKLQKEYEDKAGRPSKPPSPKQNVRKNLDFEPLSTTALILEDRPANLPAKPAEEAQKHRQQYEEMVVQAKKRELKEAQRRKKQLEERCRLEESIGNAVLTWNNEILPNWETMWCSRKVRDLWWQGIPPSVRGKVWSLAIGNELNITHELFDICLARAKERWRSFSTGGSEAETEDAGFSAADREASLELIKLDISRTFPSLCIFQQGGPYHDMLHSVLGAYTCYRPDVGYVQGMSFIAAVLILNLDTADAFIAFSNLLNKPCQMAFFRVDHGLMLTYFAAFEVFFEENLPKLFAHFKKNNLTPDIYLIDWIFTLYSKSLPLDLACRVWDVFCRDGEEFLFRTALGLLRLFQDVLTRMDFIHVAQFLTRLPEDLPAEEFFASIASIQMQSRNKKWAQVLTALQKDSREMEKGSPSLRH.

Serine 91 is modified (phosphoserine). Disordered regions lie at residues 270–303 and 315–335; these read NAQK…RKNL and LEDR…KHRQ. A compositionally biased stretch (basic and acidic residues) spans 271–287; sequence AQKDAKKLQKEYEDKAG. Serine 294 carries the phosphoserine modification. The segment covering 326–335 has biased composition (basic and acidic residues); it reads PAEEAQKHRQ. A Rab-GAP TBC domain is found at 400–610; the sequence is GIPPSVRGKV…RVWDVFCRDG (211 aa).

Interacts with ULK1. May interact with RAB11A and RAB11B, but does not exhibit any GTPase-activating activity toward these proteins. Interacts with TRAPPC8.

Its subcellular location is the golgi apparatus. It is found in the cis-Golgi network. The protein resides in the trans-Golgi network. In terms of biological role, plays a role in the regulation of starvation-induced autophagosome formation. Together with the TRAPPIII complex, regulates a constitutive trafficking step from peripheral recycling endosomes to the early Golgi, maintaining the cycling pool of ATG9 required for initiation of autophagy. This is TBC1 domain family member 14 (TBC1D14) from Bos taurus (Bovine).